The primary structure comprises 306 residues: UDP-N-acetylenolpyruvoylglucosamine reductase (306 aa).

Residues 34–198 enclose the FAD-binding PCMH-type domain; the sequence is VGGPADLLIT…LEVTFKLHNS (165 aa). R177 is a catalytic residue. S227 (proton donor) is an active-site residue. E297 is a catalytic residue.

Belongs to the MurB family. It depends on FAD as a cofactor.

The protein resides in the cytoplasm. It carries out the reaction UDP-N-acetyl-alpha-D-muramate + NADP(+) = UDP-N-acetyl-3-O-(1-carboxyvinyl)-alpha-D-glucosamine + NADPH + H(+). It participates in cell wall biogenesis; peptidoglycan biosynthesis. In terms of biological role, cell wall formation. In Clostridium botulinum (strain 657 / Type Ba4), this protein is UDP-N-acetylenolpyruvoylglucosamine reductase.